The sequence spans 356 residues: Uroporphyrinogen decarboxylase (356 aa).

Residues 25–29, aspartate 75, tyrosine 152, threonine 207, and histidine 326 each bind substrate; that span reads RQAGR.

It belongs to the uroporphyrinogen decarboxylase family. As to quaternary structure, homodimer.

The protein resides in the cytoplasm. It carries out the reaction uroporphyrinogen III + 4 H(+) = coproporphyrinogen III + 4 CO2. It functions in the pathway porphyrin-containing compound metabolism; protoporphyrin-IX biosynthesis; coproporphyrinogen-III from 5-aminolevulinate: step 4/4. Catalyzes the decarboxylation of four acetate groups of uroporphyrinogen-III to yield coproporphyrinogen-III. The protein is Uroporphyrinogen decarboxylase of Magnetococcus marinus (strain ATCC BAA-1437 / JCM 17883 / MC-1).